A 29-amino-acid polypeptide reads, in one-letter code: Cytochrome b6-f complex subunit 8 (29 aa).

A helical transmembrane segment spans residues 3-23 (ILTLGWVSILALFTWSIAMVV).

It belongs to the PetN family. The 4 large subunits of the cytochrome b6-f complex are cytochrome b6, subunit IV (17 kDa polypeptide, PetD), cytochrome f and the Rieske protein, while the 4 small subunits are PetG, PetL, PetM and PetN. The complex functions as a dimer.

Its subcellular location is the cellular thylakoid membrane. Component of the cytochrome b6-f complex, which mediates electron transfer between photosystem II (PSII) and photosystem I (PSI), cyclic electron flow around PSI, and state transitions. This chain is Cytochrome b6-f complex subunit 8, found in Microcystis aeruginosa (strain NIES-843 / IAM M-2473).